The chain runs to 496 residues: Alanine aminotransferase 1 (496 aa).

At Ala2 the chain carries N-acetylalanine. A Phosphothreonine modification is found at Thr22. An N6-(pyridoxal phosphate)lysine modification is found at Lys314.

Belongs to the class-I pyridoxal-phosphate-dependent aminotransferase family. Alanine aminotransferase subfamily. As to quaternary structure, homodimer. It depends on pyridoxal 5'-phosphate as a cofactor. Liver, heart, skeletal muscle, etc.

Its subcellular location is the cytoplasm. It catalyses the reaction L-alanine + 2-oxoglutarate = pyruvate + L-glutamate. It participates in amino-acid degradation; L-alanine degradation via transaminase pathway; pyruvate from L-alanine: step 1/1. In terms of biological role, catalyzes the reversible transamination between alanine and 2-oxoglutarate to form pyruvate and glutamate. Participates in cellular nitrogen metabolism and also in liver gluconeogenesis starting with precursors transported from skeletal muscles. This Rattus norvegicus (Rat) protein is Alanine aminotransferase 1 (Gpt).